The chain runs to 194 residues: 3-isopropylmalate dehydratase small subunit (194 aa).

The protein belongs to the LeuD family. LeuD type 1 subfamily. As to quaternary structure, heterodimer of LeuC and LeuD.

The catalysed reaction is (2R,3S)-3-isopropylmalate = (2S)-2-isopropylmalate. Its pathway is amino-acid biosynthesis; L-leucine biosynthesis; L-leucine from 3-methyl-2-oxobutanoate: step 2/4. Catalyzes the isomerization between 2-isopropylmalate and 3-isopropylmalate, via the formation of 2-isopropylmaleate. The polypeptide is 3-isopropylmalate dehydratase small subunit (Halalkalibacterium halodurans (strain ATCC BAA-125 / DSM 18197 / FERM 7344 / JCM 9153 / C-125) (Bacillus halodurans)).